The chain runs to 176 residues: Transcription factor E (176 aa).

An HTH TFE/IIEalpha-type domain is found at 8 to 90; sequence NDPVIQKYLH…LWTFHYENIP (83 aa).

The protein belongs to the TFE family. As to quaternary structure, monomer. Interaction with RNA polymerase subunits RpoF and RpoE is necessary for Tfe stimulatory transcription activity. Able to interact with Tbp and RNA polymerase in the absence of DNA promoter. Interacts both with the preinitiation and elongation complexes.

In terms of biological role, transcription factor that plays a role in the activation of archaeal genes transcribed by RNA polymerase. Facilitates transcription initiation by enhancing TATA-box recognition by TATA-box-binding protein (Tbp), and transcription factor B (Tfb) and RNA polymerase recruitment. Not absolutely required for transcription in vitro, but particularly important in cases where Tbp or Tfb function is not optimal. It dynamically alters the nucleic acid-binding properties of RNA polymerases by stabilizing the initiation complex and destabilizing elongation complexes. Seems to translocate with the RNA polymerase following initiation and acts by binding to the non template strand of the transcription bubble in elongation complexes. The protein is Transcription factor E of Haloquadratum walsbyi (strain DSM 16790 / HBSQ001).